Reading from the N-terminus, the 276-residue chain is 6-chlorohydroxyquinol 1,2-dioxygenase (276 aa).

Tyrosine 157, tyrosine 191, histidine 215, and histidine 217 together coordinate Fe cation.

The protein belongs to the intradiol ring-cleavage dioxygenase family. The cofactor is Fe(3+).

It participates in aromatic compound metabolism. Its pathway is xenobiotic degradation. Functionally, involved in the degradation of 2,4,6-trichlorophenol (2,4,6-TCP). May catalyze the oxidation of 6-chlorohydroxyquinol (6-CHQ) to 2-chloromaleylacetate (2-CMA). The sequence is that of 6-chlorohydroxyquinol 1,2-dioxygenase from Cupriavidus pinatubonensis (strain JMP 134 / LMG 1197) (Cupriavidus necator (strain JMP 134)).